The chain runs to 153 residues: Small ribosomal subunit protein uS19A (153 aa).

Belongs to the universal ribosomal protein uS19 family. Component of the small ribosomal subunit (SSU). Mature yeast ribosomes consist of a small (40S) and a large (60S) subunit. The 40S small subunit contains 1 molecule of ribosomal RNA (18S rRNA) and at least 33 different proteins. The large 60S subunit contains 3 rRNA molecules (25S, 5.8S and 5S rRNA) and at least 46 different proteins.

It localises to the cytoplasm. The protein localises to the nucleus. The protein resides in the nucleolus. Its function is as follows. Component of the ribosome, a large ribonucleoprotein complex responsible for the synthesis of proteins in the cell. The small ribosomal subunit (SSU) binds messenger RNAs (mRNAs) and translates the encoded message by selecting cognate aminoacyl-transfer RNA (tRNA) molecules. The large subunit (LSU) contains the ribosomal catalytic site termed the peptidyl transferase center (PTC), which catalyzes the formation of peptide bonds, thereby polymerizing the amino acids delivered by tRNAs into a polypeptide chain. The nascent polypeptides leave the ribosome through a tunnel in the LSU and interact with protein factors that function in enzymatic processing, targeting, and the membrane insertion of nascent chains at the exit of the ribosomal tunnel. uS19 is involved in the nuclear export of the small ribosomal subunit precursor. Has a role in the late stage of the assembly of pre-40S particles within the nucleus and controls their export to the cytoplasm. This chain is Small ribosomal subunit protein uS19A (rps1501), found in Schizosaccharomyces pombe (strain 972 / ATCC 24843) (Fission yeast).